The sequence spans 445 residues: Homoserine O-succinyltransferase (445 aa).

Residues 45 to 411 (NAVLICHALS…APHGHDSFLF (367 aa)) form the AB hydrolase-1 domain. Residue S153 is the Nucleophile of the active site. R223 provides a ligand contact to substrate. Active-site residues include D373 and H406. D407 lines the substrate pocket.

The protein belongs to the AB hydrolase superfamily. MetX family. Homodimer.

It localises to the cytoplasm. It catalyses the reaction L-homoserine + succinyl-CoA = O-succinyl-L-homoserine + CoA. The protein operates within amino-acid biosynthesis; L-methionine biosynthesis via de novo pathway; O-succinyl-L-homoserine from L-homoserine: step 1/1. In terms of biological role, transfers a succinyl group from succinyl-CoA to L-homoserine, forming succinyl-L-homoserine. The polypeptide is Homoserine O-succinyltransferase (Psychrobacter arcticus (strain DSM 17307 / VKM B-2377 / 273-4)).